A 117-amino-acid polypeptide reads, in one-letter code: MNKKDARIKRAVKTRKKLYKLDAIRLVIHRTCRHIYAQIIAKDNSNVLVAASTTEKLISSQLTTTSNKKAAAIVGKIIAERAIKKGIINVSFDRSGFKYHGRVKMLADRARQTGLSF.

It belongs to the universal ribosomal protein uL18 family. As to quaternary structure, part of the 50S ribosomal subunit; part of the 5S rRNA/L5/L18/L25 subcomplex. Contacts the 5S and 23S rRNAs.

In terms of biological role, this is one of the proteins that bind and probably mediate the attachment of the 5S RNA into the large ribosomal subunit, where it forms part of the central protuberance. The chain is Large ribosomal subunit protein uL18 from Blochmanniella pennsylvanica (strain BPEN).